The following is a 79-amino-acid chain: UPF0180 protein BCE_1513 (79 aa).

This sequence belongs to the UPF0180 family.

The chain is UPF0180 protein BCE_1513 from Bacillus cereus (strain ATCC 10987 / NRS 248).